The sequence spans 484 residues: Rho guanine nucleotide exchange factor 35 (484 aa).

Residues 139–418 (FSSDLGSEEE…ALIAPEDSPH (280 aa)) form a disordered region. Phosphoserine is present on S184. Residues 217-237 (ESQGLLHPQEVQVLEEQGQQE) show a composition bias toward low complexity. Residues 266 to 278 (NDEKGEQKQKQEQ) show a composition bias toward basic and acidic residues. Positions 299–309 (GLNDGEWEQED) are enriched in acidic residues. 2 stretches are compositionally biased toward basic and acidic residues: residues 323-368 (GEER…KEKG) and 394-404 (RSREEENEHHG).

The sequence is that of Rho guanine nucleotide exchange factor 35 (ARHGEF35) from Homo sapiens (Human).